The primary structure comprises 92 residues: CRISPR-associated endoribonuclease Cas2 2 (92 aa).

Residue Asp-12 coordinates Mg(2+).

The protein belongs to the CRISPR-associated endoribonuclease Cas2 protein family. In terms of assembly, homodimer, forms a heterotetramer with a Cas1 homodimer. Mg(2+) is required as a cofactor.

CRISPR (clustered regularly interspaced short palindromic repeat), is an adaptive immune system that provides protection against mobile genetic elements (viruses, transposable elements and conjugative plasmids). CRISPR clusters contain sequences complementary to antecedent mobile elements and target invading nucleic acids. CRISPR clusters are transcribed and processed into CRISPR RNA (crRNA). Functions as a ssRNA-specific endoribonuclease. Involved in the integration of spacer DNA into the CRISPR cassette. The chain is CRISPR-associated endoribonuclease Cas2 2 (cas22) from Archaeoglobus fulgidus (strain ATCC 49558 / DSM 4304 / JCM 9628 / NBRC 100126 / VC-16).